The primary structure comprises 590 residues: Zinc finger protein 703 (590 aa).

Positions 1–14 (MSDSPAGSNPRTPE) are enriched in polar residues. Disordered regions lie at residues 1–43 (MSDS…DPLR), 96–293 (CSQI…AGHV), and 341–366 (LVGGQLSGGLGLPPGKPPSSSPLTGA). Serine 2 carries the N-acetylserine modification. 4 stretches are compositionally biased toward low complexity: residues 27–37 (PAVPAAVSLLP), 128–139 (RSAPGAASAAAA), 171–189 (GSSSVSSTSSSSSSSPGDK), and 207–219 (APVSASSSSSSPG). Basic and acidic residues predominate over residues 241-251 (ELDKKDQEPKP). Serine 252 is modified (phosphoserine). Composition is skewed to gly residues over residues 260 to 273 (RGGGGEPGAHGGAE) and 341 to 352 (LVGGQLSGGLGL). The C2H2-type zinc-finger motif lies at 456-484 (HSCNWVAASGPCDKRFATSEELLSHLRTH). Omega-N-methylarginine is present on arginine 580.

It belongs to the Elbow/Noc family. Interacts with TLE4; increases transcriptional repression. Interacts with DCAF7 and PHB2. May interact with HSPD1. As to expression, expressed in mammary epithelium.

Its subcellular location is the nucleus. It is found in the cytoplasm. Functionally, transcriptional corepressor which does not bind directly to DNA and may regulate transcription through recruitment of histone deacetylases to gene promoters. Regulates cell adhesion, migration and proliferation. May be required for segmental gene expression during hindbrain development. The polypeptide is Zinc finger protein 703 (ZNF703) (Homo sapiens (Human)).